The chain runs to 537 residues: MGGAGILLFLLAWAGAGVAWSPPKGKCPPHCSCSKENTLCEGSPELPESFSTTLLSLSLVRMGVSRLKAGSFLKMPSLHLLLFTSNTFSVIEGDAFIGLSYLQYLFIEDNKIGSISKNALRGLRSLTHLSLANNHLEALPRFLFRGLETLTHVDLRGNPFQCDCRVLWLLQWMPTVNASVGTGACAGPPAVAQIQLNHLDPKKFKCRATELSWLQTVGESALSVESFSYQGEPHMVLAQPFAGRCLILVWDYSLQRFRPEEELSAPSVVSCKPLVLGPRLFILAARLWGGSQLWSRSSPDLRLTPVQVLAPQRLLRPNDAELLWLDGQPCFVVADASKAGSTTLLCRDGPGFYPRQSLHAWHRDTDAEALELDGRPHLLLASASQRPVLFHWVGGRFERRTDIPEAEDVYATKHFQAGGDVFLCLTRYIGDSMVMRWDGSMFRLLQQLPSRGSHVFQPLLIARDQLAILGSDFAFSQVFRFESDKGILEPLQELGPPALVAPRAFAQVTVAGRRFLFAACFKGPTQIYQHHELDLSA.

The N-terminal stretch at 1-19 (MGGAGILLFLLAWAGAGVA) is a signal peptide. 4 LRR repeats span residues 53-74 (TLLS…SFLK), 77-98 (SLHL…AFIG), 101-122 (YLQY…ALRG), and 125-146 (SLTH…LFRG). The 51-residue stretch at 158 to 208 (NPFQCDCRVLWLLQWMPTVNASVGTGACAGPPAVAQIQLNHLDPKKFKCRA) folds into the LRRCT domain. Asparagine 177 carries an N-linked (GlcNAc...) asparagine glycan. 7 EAR repeats span residues 210 to 252 (ELSW…VWDY), 256 to 298 (RFRP…SRSS), 302 to 349 (RLTP…CRDG), 351 to 394 (GFYP…HWVG), 396 to 439 (RFER…RWDG), 441 to 483 (MFRL…RFES), and 487 to 532 (ILEP…QHHE).

As to quaternary structure, can bind to ADAM11, ADAM22 and ADAM23. In terms of tissue distribution, brain. Expressed in the entire developing peripheral nerves. Strongly expressed in the trigeminal nerve and ganglion and particularly abundant in the boundary cap cells - a transient population of cells that contributes to the Schwann cell population of the dorsal root nerve.

Its subcellular location is the secreted. In terms of biological role, component of Schwann cell signaling pathway(s) that controls axon segregation and myelin formation. This chain is Leucine-rich repeat LGI family member 4 (Lgi4), found in Mus musculus (Mouse).